Reading from the N-terminus, the 341-residue chain is tRNA N6-adenosine threonylcarbamoyltransferase (341 aa).

Fe cation-binding residues include H115 and H119. Substrate is bound by residues 137–141 (IVSGG), D170, G183, D187, and N276. D304 contributes to the Fe cation binding site.

This sequence belongs to the KAE1 / TsaD family. Fe(2+) is required as a cofactor.

It is found in the cytoplasm. The catalysed reaction is L-threonylcarbamoyladenylate + adenosine(37) in tRNA = N(6)-L-threonylcarbamoyladenosine(37) in tRNA + AMP + H(+). Required for the formation of a threonylcarbamoyl group on adenosine at position 37 (t(6)A37) in tRNAs that read codons beginning with adenine. Is involved in the transfer of the threonylcarbamoyl moiety of threonylcarbamoyl-AMP (TC-AMP) to the N6 group of A37, together with TsaE and TsaB. TsaD likely plays a direct catalytic role in this reaction. The protein is tRNA N6-adenosine threonylcarbamoyltransferase of Staphylococcus aureus (strain USA300).